A 616-amino-acid chain; its full sequence is Chaperone protein HscA (616 aa).

It belongs to the heat shock protein 70 family.

In terms of biological role, chaperone involved in the maturation of iron-sulfur cluster-containing proteins. Has a low intrinsic ATPase activity which is markedly stimulated by HscB. Involved in the maturation of IscU. The chain is Chaperone protein HscA from Salmonella newport (strain SL254).